The primary structure comprises 341 residues: Arfaptin-2 (341 aa).

The segment at Asn46–Val84 is disordered. Over residues Thr65–Gly81 the composition is skewed to low complexity. Ser72 is subject to Phosphoserine. Positions Thr121–Gln321 constitute an AH domain.

As to quaternary structure, forms homodimers or heterodimers with ARFIP1. Interacts with RAC1. Specifically binds to GTP-bound ARF1 and ARF6, but binds to RAC1.GTP and RAC1.GDP with similar affinities. Interacts with ARL1. Interacts (via N-terminus) with IKBKB and IKBKG; these interactions inhibit activation of NF-kappa-B.

The protein resides in the golgi apparatus. Its subcellular location is the trans-Golgi network membrane. In terms of biological role, plays a role in constitutive metalloproteinase (MMP) secretion from the trans Golgi network. May have important functions during vesicle biogenesis at certain cargo subdomains, which could be predominantly utilized by secreted MMPs, such as MMP7 and MMP2. Also involved in autophagy by regulating the starvation-dependent trafficking of ATG9A vesicles which deliver the phosphatidylinositol 4-kinase beta (PI4KB) to the autophagosome initiation site. Involved in phagophore growth during mitophagy by regulating ATG9A trafficking to mitochondria. In addition, plays a role in NF-kappa-B inhibition by interacting with IKBKB and IKBKG. This is Arfaptin-2 from Mus musculus (Mouse).